The primary structure comprises 421 residues: Protein HOMOLOG OF MAMMALIAN LYST-INTERACTING PROTEIN 5 (421 aa).

Serine 2 carries the N-acetylserine modification. Residues 146-374 (IKEGRKPTPG…KYHYDSSYQP (229 aa)) form a disordered region. Residues 165–185 (SIPSSGPSGSYDHSASDTNTT) are compositionally biased toward polar residues. The segment covering 188–207 (HRTELDPPHDSNDDSSHHQF) has biased composition (basic and acidic residues). Over residues 245-258 (LPPPTGPSDSPYPH) the composition is skewed to pro residues. Positions 278–293 (NYSSHEPSPNSLPNFQ) are enriched in polar residues. Low complexity-rich tracts occupy residues 294–308 (SYPS…STSP) and 317–337 (PEPY…SFSS).

This sequence belongs to the VTA1 family. As to quaternary structure, homodimer. Interacts with SKD1/VPS4, VPS60-1, CHMP1A and CHMP1B. Binds to PROS/At4g24370. Interacts with MPK6 and MPK3. In terms of processing, phosphorylated by activated MPK6 and MPK3, this activation is required to trigger multivesicular bodies (MVBs) trafficking upon plant infection.

The protein resides in the cytoplasm. It localises to the endosome membrane. Its subcellular location is the nucleus. The protein localises to the endosome. It is found in the multivesicular body. Involved in the endosomal multivesicular bodies (MVB) pathway. MVBs contain intraluminal vesicles (ILVs) that are generated by invagination and scission from the limiting membrane of the endosome and are delivered to lysosomes enabling degradation of membrane proteins. Thought to be a cofactor of SKD1/VPS4, which catalyzes the disassembly of membrane-associated ESCRT-III. Target of pathogen-responsive mitogen-activated protein kinases (MPKs) that plays a critical role in plant basal resistance to Pseudomonas syringae in a SKD1-dependent manner by promoting multivesicular bodies (MVBs) trafficking upon plant infection. The chain is Protein HOMOLOG OF MAMMALIAN LYST-INTERACTING PROTEIN 5 from Arabidopsis thaliana (Mouse-ear cress).